The primary structure comprises 82 residues: Small ribosomal subunit protein bS16 (82 aa).

Belongs to the bacterial ribosomal protein bS16 family.

The protein is Small ribosomal subunit protein bS16 of Tolumonas auensis (strain DSM 9187 / NBRC 110442 / TA 4).